Reading from the N-terminus, the 322-residue chain is Ribonuclease Z (322 aa).

Zn(2+) contacts are provided by H62, H64, D66, H67, H139, D210, and H268. Residue D66 is the Proton acceptor of the active site.

Belongs to the RNase Z family. As to quaternary structure, homodimer. Zn(2+) is required as a cofactor.

It carries out the reaction Endonucleolytic cleavage of RNA, removing extra 3' nucleotides from tRNA precursor, generating 3' termini of tRNAs. A 3'-hydroxy group is left at the tRNA terminus and a 5'-phosphoryl group is left at the trailer molecule.. Its function is as follows. Zinc phosphodiesterase, which displays some tRNA 3'-processing endonuclease activity. Probably involved in tRNA maturation, by removing a 3'-trailer from precursor tRNA. The polypeptide is Ribonuclease Z (Nostoc sp. (strain PCC 7120 / SAG 25.82 / UTEX 2576)).